Consider the following 696-residue polypeptide: C2 domain-containing protein 2 (696 aa).

Residues 8–28 (VQWLFLVSLFVAALGTVGLYL) form a helical membrane-spanning segment. The SMP-LBD domain maps to 45-238 (EPDELRRRES…PTQVKEAQSL (194 aa)). Ser-54 carries the post-translational modification Phosphoserine. Residues 241–357 (PSSTAQEPCP…RKQPNGPQTF (117 aa)) form the C2 domain. Residue Ser-436 is modified to Phosphoserine. Phosphothreonine is present on Thr-440. The interval 551–611 (ATEASATTPP…DGDELSESSL (61 aa)) is disordered. Residues 573–588 (KPRENDLDSWELEKES) are compositionally biased toward basic and acidic residues. Ser-581 carries the phosphoserine modification.

Its subcellular location is the membrane. The polypeptide is C2 domain-containing protein 2 (Mus musculus (Mouse)).